We begin with the raw amino-acid sequence, 216 residues long: Adenylate kinase (216 aa).

10 to 15 is an ATP binding site; that stretch reads GAGKGT. Positions 30-59 are NMP; it reads STGDMLRAAVKAGTPLGLELKKVMDAGQLV. AMP contacts are provided by residues Thr31, Arg36, 57–59, 85–88, and Gln92; these read QLV and GFPR. The tract at residues 122–159 is LID; it reads GRRVHLASGRTYHIQYNPPKVEGKDDETGEDLIQRDDD. Residues Arg123 and 132 to 133 contribute to the ATP site; that span reads TY. Residues Arg156 and Arg167 each contribute to the AMP site. Gly202 serves as a coordination point for ATP.

Belongs to the adenylate kinase family. Monomer.

Its subcellular location is the cytoplasm. It carries out the reaction AMP + ATP = 2 ADP. It functions in the pathway purine metabolism; AMP biosynthesis via salvage pathway; AMP from ADP: step 1/1. Functionally, catalyzes the reversible transfer of the terminal phosphate group between ATP and AMP. Plays an important role in cellular energy homeostasis and in adenine nucleotide metabolism. This Pseudomonas putida (strain ATCC 700007 / DSM 6899 / JCM 31910 / BCRC 17059 / LMG 24140 / F1) protein is Adenylate kinase.